The sequence spans 296 residues: 4-hydroxy-tetrahydrodipicolinate synthase (296 aa).

Position 46 (threonine 46) interacts with pyruvate. Tyrosine 134 (proton donor/acceptor) is an active-site residue. Residue lysine 162 is the Schiff-base intermediate with substrate of the active site. Isoleucine 204 is a binding site for pyruvate.

This sequence belongs to the DapA family. In terms of assembly, homotetramer; dimer of dimers.

It is found in the cytoplasm. The catalysed reaction is L-aspartate 4-semialdehyde + pyruvate = (2S,4S)-4-hydroxy-2,3,4,5-tetrahydrodipicolinate + H2O + H(+). The protein operates within amino-acid biosynthesis; L-lysine biosynthesis via DAP pathway; (S)-tetrahydrodipicolinate from L-aspartate: step 3/4. In terms of biological role, catalyzes the condensation of (S)-aspartate-beta-semialdehyde [(S)-ASA] and pyruvate to 4-hydroxy-tetrahydrodipicolinate (HTPA). The sequence is that of 4-hydroxy-tetrahydrodipicolinate synthase from Clostridium novyi (strain NT).